The sequence spans 630 residues: MITGRDIYDVLAAIVPLYVAMFLAYGSVRWWGIFTPDQCSGINRFVAVFAVPLLSFHFISTNDPYSMNYRFLAADSLQKLVILAALAVWHNLLSRYRRNGGAAASLDWTITLFSLSTLPNTLVMGIPLLRAMYGDFSGSLMVQIVVLQSVIWYTLMLFLFEYRGAKALISEQFPPDVGASIASFRVDSDVVSLNGREALQADAEVGRDGRVHVVIRRSASASTTGGGGGAARSGVSRAYGASNAMTPRASNLTGVEIYSLQTSREPTPRASSFNQADFYAMFSGSKMASQMASPMAQHGGAGGRAQGLDEQVTNKFASGKAADPPSYPAPNPGMMPAPRKKELGGSNSNSNKELHMFVWSSSASPVSEANLRNAVNHAASTDFASAPPPAAVPVGGATPKGVSGSVTPAAKNGGGELEIEDGLKSPAAGLAAKFPVSGSPYVAPRKKGGGADVPGLAEAAHPMPPTSVMTRLILIMVWRKLIRNPNTYSSLIGLVWSLVSFRWNIQMPSIIKGSISILSDAGLGMAMFSLGLFMALQPKIISCGKTVATFAMAVRFLTGPAVIAATSIAIGLRGVLLHVAIVQAALPQGIVPFVFAKEYNCHPQILSTAVIFGMLIALPITILYYVLLGI.

At 1-6 (MITGRD) the chain is on the extracellular side. The chain crosses the membrane as a helical span at residues 7–27 (IYDVLAAIVPLYVAMFLAYGS). Residues 28–38 (VRWWGIFTPDQ) lie on the Cytoplasmic side of the membrane. Residues 39–59 (CSGINRFVAVFAVPLLSFHFI) traverse the membrane as a helical segment. Val51 contributes to the (indol-3-yl)acetate binding site. Residues 60-70 (STNDPYSMNYR) lie on the Extracellular side of the membrane. Residues 71–91 (FLAADSLQKLVILAALAVWHN) form a helical membrane-spanning segment. Residues 92–108 (LLSRYRRNGGAAASLDW) lie on the Cytoplasmic side of the membrane. Residues 109–129 (TITLFSLSTLPNTLVMGIPLL) traverse the membrane as a helical segment. (indol-3-yl)acetate is bound by residues Asn120 and Leu122. Residues 130-139 (RAMYGDFSGS) are Extracellular-facing. A helical transmembrane segment spans residues 140–160 (LMVQIVVLQSVIWYTLMLFLF). Tyr153 is a (indol-3-yl)acetate binding site. Topologically, residues 161–490 (EYRGAKALIS…LIRNPNTYSS (330 aa)) are cytoplasmic. Residues 317 to 350 (ASGKAADPPSYPAPNPGMMPAPRKKELGGSNSNS) are disordered. Positions 325-335 (PSYPAPNPGMM) are enriched in pro residues. A helical membrane pass occupies residues 491 to 511 (LIGLVWSLVSFRWNIQMPSII). Residues 512–514 (KGS) lie on the Extracellular side of the membrane. A helical transmembrane segment spans residues 515-535 (ISILSDAGLGMAMFSLGLFMA). At 536–549 (LQPKIISCGKTVAT) the chain is on the cytoplasmic side. The chain crosses the membrane as a helical span at residues 550–570 (FAMAVRFLTGPAVIAATSIAI). Residues 571-574 (GLRG) lie on the Extracellular side of the membrane. The helical transmembrane segment at 575–595 (VLLHVAIVQAALPQGIVPFVF) threads the bilayer. (indol-3-yl)acetate-binding residues include Ile590 and Val591. Residues 596–609 (AKEYNCHPQILSTA) lie on the Cytoplasmic side of the membrane. A helical transmembrane segment spans residues 610-630 (VIFGMLIALPITILYYVLLGI).

This sequence belongs to the auxin efflux carrier (TC 2.A.69.1) family. In terms of assembly, homodimer. In terms of tissue distribution, expressed in roots, leaves, shoot apex and panicles. Expressed in roots, stem bases and young panicles.

It is found in the membrane. In terms of biological role, acts as a component of the auxin efflux carrier. Involved in the basipetal polar auxin transport which contributes to the spreading growth of the tillers. This Oryza sativa subsp. japonica (Rice) protein is Auxin efflux carrier component 2.